The chain runs to 104 residues: Gallinacin-11 (104 aa).

A signal peptide spans 1–22 (MKLFSCLMALLLFLLQAVPGLG). Cystine bridges form between cysteine 30/cysteine 60, cysteine 37/cysteine 53, and cysteine 43/cysteine 61.

This sequence belongs to the beta-defensin family. In terms of tissue distribution, detected in outer membrane of the vitelline layer of the egg (at protein level). Expressed in the liver, gall bladder, kidney, testis, ovary and male and female reproductive tracts. Expressed in the ovarian stroma, but not in the ovarian follicles. No expression is detected in bone marrow.

It is found in the secreted. The protein resides in the cytoplasmic granule. Functionally, has bactericidal activity. This chain is Gallinacin-11 (GAL11), found in Gallus gallus (Chicken).